The following is a 377-amino-acid chain: Phosphoserine aminotransferase (377 aa).

Arginine 43 contacts L-glutamate. Pyridoxal 5'-phosphate-binding residues include tryptophan 105, threonine 164, aspartate 189, and glutamine 212. The residue at position 213 (lysine 213) is an N6-(pyridoxal phosphate)lysine. 254–255 (NT) is a binding site for pyridoxal 5'-phosphate.

This sequence belongs to the class-V pyridoxal-phosphate-dependent aminotransferase family. SerC subfamily. In terms of assembly, homodimer. Pyridoxal 5'-phosphate serves as cofactor.

It localises to the cytoplasm. It catalyses the reaction O-phospho-L-serine + 2-oxoglutarate = 3-phosphooxypyruvate + L-glutamate. The enzyme catalyses 4-(phosphooxy)-L-threonine + 2-oxoglutarate = (R)-3-hydroxy-2-oxo-4-phosphooxybutanoate + L-glutamate. Its pathway is amino-acid biosynthesis; L-serine biosynthesis; L-serine from 3-phospho-D-glycerate: step 2/3. It participates in cofactor biosynthesis; pyridoxine 5'-phosphate biosynthesis; pyridoxine 5'-phosphate from D-erythrose 4-phosphate: step 3/5. Catalyzes the reversible conversion of 3-phosphohydroxypyruvate to phosphoserine and of 3-hydroxy-2-oxo-4-phosphonooxybutanoate to phosphohydroxythreonine. This Bordetella pertussis (strain Tohama I / ATCC BAA-589 / NCTC 13251) protein is Phosphoserine aminotransferase.